Here is a 608-residue protein sequence, read N- to C-terminus: Endo-1,4-beta-xylanase C (608 aa).

Positions 1-25 (MKTFSVTKSSVVFAMALGMASTAFA) are cleaved as a signal peptide. Residues 40–250 (TITSNQTGKI…VNGEVRGGHM (211 aa)) enclose the GH11 1 domain. The active-site Nucleophile is the Glu-142. The active-site Proton donor is the Glu-237. Residues 263–294 (SDPVSSSSVKSSSSTDAPKSSSSKGNGNVSGK) are compositionally biased toward low complexity. The interval 263–296 (SDPVSSSSVKSSSSTDAPKSSSSKGNGNVSGKID) is disordered. Positions 316–514 (NSSVTGNVGS…GSGSFDVTYF (199 aa)) constitute a GH11 2 domain. Glu-409 functions as the Nucleophile in the catalytic mechanism. The active-site Proton donor is the Glu-501. Residues 520-539 (AHPLAQPEPESSSSEAKVES) form a disordered region. A compositionally biased stretch (low complexity) spans 527-539 (EPESSSSEAKVES).

The protein belongs to the glycosyl hydrolase 11 (cellulase G) family.

The enzyme catalyses Endohydrolysis of (1-&gt;4)-beta-D-xylosidic linkages in xylans.. It participates in glycan degradation; xylan degradation. Cleaves xylans with the production of xylose, xylobiose and xylo-oligosaccharides. In Fibrobacter succinogenes (strain ATCC 19169 / S85), this protein is Endo-1,4-beta-xylanase C (xynC).